A 1075-amino-acid chain; its full sequence is Disheveled-associated activator of morphogenesis 2 (1075 aa).

The 377-residue stretch at 40–416 (VPIPPTEELN…QIVLQDERGD (377 aa)) folds into the GBD/FH3 domain. A coiled-coil region spans residues 437 to 517 (NENEVKQWRD…VAQLNEYSQG (81 aa)). Disordered stretches follow at residues 517–611 (GGSI…IPQP), 1006–1025 (KEQR…SISE), and 1048–1075 (SKLK…KLNY). Over residues 523–532 (PAPPPPPPGG) the composition is skewed to pro residues. The span at 533 to 544 (PLALSSALSSAL) shows a compositional bias: low complexity. Positions 550-581 (PPLPPPLPFSSCPPPPAPPPPPGGPPPPPGAP) are enriched in pro residues. The region spanning 605 to 1075 (KKSIPQPSHP…RERVVTKLNY (471 aa)) is the FH2 domain. One can recognise a DAD domain in the interval 1025-1075 (EETGEFDDLVSALRSGEVFDKDLSKLKRNRKRSGNQGLETSRERVVTKLNY). Residues 1064 to 1075 (TSRERVVTKLNY) are compositionally biased toward basic and acidic residues.

It belongs to the formin homology family. In terms of tissue distribution, expressed in progenitor populations of the embryonic spinal cord (at protein level).

Key regulator of the Wnt signaling pathway, which is required for various processes during development, such as dorsal patterning, determination of left/right symmetry or myelination in the central nervous system. Acts downstream of Wnt ligands and upstream of beta-catenin (CTNNB1). Required for canonical Wnt signaling pathway during patterning in the dorsal spinal cord by promoting the aggregation of Disheveled (Dvl) complexes, thereby clustering and formation of Wnt receptor signalosomes and potentiating Wnt activity. During dorsal patterning of the spinal cord, inhibits oligodendrocytes differentiation via interaction with PIP5K1A. Also regulates non-canonical Wnt signaling pathway. Acts downstream of PITX2 in the developing gut and is required for left/right asymmetry within dorsal mesentery: affects mesenchymal condensation by lengthening cadherin-based junctions through WNT5A and non-canonical Wnt signaling, inducing polarized condensation in the left dorsal mesentery necessary to initiate gut rotation. Together with DAAM1, required for myocardial maturation and sarcomere assembly. The polypeptide is Disheveled-associated activator of morphogenesis 2 (Gallus gallus (Chicken)).